The chain runs to 505 residues: RNA-binding region-containing protein 3 (505 aa).

The RRM 1 domain occupies 15 to 90; that stretch reads KTLIIRHLPR…RTLVVEFAKD (76 aa). Disordered stretches follow at residues 96–123, 193–236, 354–374, and 486–505; these read ILKD…QPSV, PPMF…EEER, AQVP…SEFI, and ARSA…GRKH. The span at 193-214 shows a compositional bias: pro residues; sequence PPMFEMPSGPLPPPFPPENPPL. Acidic residues-rich tracts occupy residues 221–235 and 361–370; these read GSEE…DEEE and EEQEEDEDIP. The 84-residue stretch at 405 to 488 folds into the RRM 2 domain; sequence CRLYVKNVAK…KPLVVQFARS (84 aa). Basic and acidic residues predominate over residues 491–505; that stretch reads PKQESADPKKGGRKH.

As to quaternary structure, component of the U11/U12 snRNPs that are part of the U12-type spliceosome.

It is found in the nucleus. In terms of biological role, participates in pre-mRNA U12-dependent splicing, performed by the minor spliceosome which removes U12-type introns. U12-type introns comprise less than 1% of all non-coding sequences. This Danio rerio (Zebrafish) protein is RNA-binding region-containing protein 3.